A 74-amino-acid chain; its full sequence is Sec-independent protein translocase protein TatA (74 aa).

The helical transmembrane segment at 1 to 21 threads the bilayer; sequence MGGISIWQLLIIVAIIVLLFG. Residues 51–74 form a disordered region; sequence ANFDKVEAKESTSTTEKTKEKEQA.

Belongs to the TatA/E family. As to quaternary structure, the Tat system comprises two distinct complexes: a TatABC complex, containing multiple copies of TatA, TatB and TatC subunits, and a separate TatA complex, containing only TatA subunits. Substrates initially bind to the TatABC complex, which probably triggers association of the separate TatA complex to form the active translocon.

Its subcellular location is the cell inner membrane. Its function is as follows. Part of the twin-arginine translocation (Tat) system that transports large folded proteins containing a characteristic twin-arginine motif in their signal peptide across membranes. TatA could form the protein-conducting channel of the Tat system. The chain is Sec-independent protein translocase protein TatA from Haemophilus ducreyi (strain 35000HP / ATCC 700724).